A 1360-amino-acid polypeptide reads, in one-letter code: DNA-directed RNA polymerase subunit beta (1360 aa).

This sequence belongs to the RNA polymerase beta chain family. In terms of assembly, the RNAP catalytic core consists of 2 alpha, 1 beta, 1 beta' and 1 omega subunit. When a sigma factor is associated with the core the holoenzyme is formed, which can initiate transcription.

The catalysed reaction is RNA(n) + a ribonucleoside 5'-triphosphate = RNA(n+1) + diphosphate. In terms of biological role, DNA-dependent RNA polymerase catalyzes the transcription of DNA into RNA using the four ribonucleoside triphosphates as substrates. This chain is DNA-directed RNA polymerase subunit beta, found in Magnetococcus marinus (strain ATCC BAA-1437 / JCM 17883 / MC-1).